A 369-amino-acid polypeptide reads, in one-letter code: 3',5'-cyclic-nucleotide phosphodiesterase 1 (369 aa).

Belongs to the cyclic nucleotide phosphodiesterase class-II family.

It carries out the reaction a nucleoside 3',5'-cyclic phosphate + H2O = a nucleoside 5'-phosphate + H(+). Its function is as follows. Controls the level of cAMP in yeast cells, together with the high-affinity cAMP phosphodiesterase (PDE2). This Saccharomyces cerevisiae (strain ATCC 204508 / S288c) (Baker's yeast) protein is 3',5'-cyclic-nucleotide phosphodiesterase 1 (PDE1).